A 408-amino-acid polypeptide reads, in one-letter code: AA9 family lytic polysaccharide monooxygenase A (408 aa).

The N-terminal stretch at 1–20 (MKTTTYSLLALAAASKLASA) is a signal peptide. Cu(2+) contacts are provided by H21 and H103. A disulfide bridge links C63 with C186. An N-linked (GlcNAc...) asparagine glycan is attached at N151. H172 contacts O2. Y183 is a Cu(2+) binding site. N-linked (GlcNAc...) asparagine glycosylation is found at N331 and N381. In terms of domain architecture, CBM1 spans 369-405 (GVAKQYERCGGINHTGPTTCESGSVCKKWNPYYYQCV).

This sequence belongs to the polysaccharide monooxygenase AA9 family. Cu(2+) serves as cofactor.

It localises to the secreted. It catalyses the reaction [(1-&gt;4)-beta-D-glucosyl]n+m + reduced acceptor + O2 = 4-dehydro-beta-D-glucosyl-[(1-&gt;4)-beta-D-glucosyl]n-1 + [(1-&gt;4)-beta-D-glucosyl]m + acceptor + H2O.. Its function is as follows. Lytic polysaccharide monooxygenase (LPMO) that depolymerizes crystalline and amorphous polysaccharides via the oxidation of scissile alpha- or beta-(1-4)-glycosidic bonds, yielding C4 oxidation products. Catalysis by LPMOs requires the reduction of the active-site copper from Cu(II) to Cu(I) by a reducing agent and H(2)O(2) or O(2) as a cosubstrate. This is AA9 family lytic polysaccharide monooxygenase A (eglD) from Aspergillus kawachii (strain NBRC 4308) (White koji mold).